Reading from the N-terminus, the 386-residue chain is DNA-directed RNA polymerase subunit Rpo1C (386 aa).

The protein belongs to the RNA polymerase beta' chain family. As to quaternary structure, part of the RNA polymerase complex.

Its subcellular location is the cytoplasm. The enzyme catalyses RNA(n) + a ribonucleoside 5'-triphosphate = RNA(n+1) + diphosphate. Its function is as follows. DNA-dependent RNA polymerase (RNAP) catalyzes the transcription of DNA into RNA using the four ribonucleoside triphosphates as substrates. Forms part of the jaw domain. In Methanococcus vannielii (strain ATCC 35089 / DSM 1224 / JCM 13029 / OCM 148 / SB), this protein is DNA-directed RNA polymerase subunit Rpo1C.